A 287-amino-acid polypeptide reads, in one-letter code: RxLR effector protein Avr4 (287 aa).

The N-terminal stretch at M1–A24 is a signal peptide. Residues R42 to R55 carry the RxLR-dEER motif. The W1 motif stretch occupies residues K115–R138. Residues Q148–F171 form a W2 motif region. The W3 motif stretch occupies residues L221 to K244. The tract at residues A246–D267 is y motif.

This sequence belongs to the RxLR effector family.

The protein localises to the secreted. It is found in the host cytoplasm. Its subcellular location is the host nucleus. It localises to the host nucleolus. The protein resides in the host cytoskeleton. Secreted effector that acts as an elicitor of hypersensitive response (HR) specifically on plants carrying defense protein R4, through its interaction with this protein. The polypeptide is RxLR effector protein Avr4 (Phytophthora infestans (strain T30-4) (Potato late blight agent)).